A 171-amino-acid polypeptide reads, in one-letter code: Peptide deformylase (171 aa).

Residues cysteine 91 and histidine 133 each contribute to the Fe cation site. Glutamate 134 is a catalytic residue. Histidine 137 serves as a coordination point for Fe cation.

It belongs to the polypeptide deformylase family. It depends on Fe(2+) as a cofactor.

It catalyses the reaction N-terminal N-formyl-L-methionyl-[peptide] + H2O = N-terminal L-methionyl-[peptide] + formate. Functionally, removes the formyl group from the N-terminal Met of newly synthesized proteins. Requires at least a dipeptide for an efficient rate of reaction. N-terminal L-methionine is a prerequisite for activity but the enzyme has broad specificity at other positions. The protein is Peptide deformylase of Edwardsiella ictaluri (strain 93-146).